Here is a 445-residue protein sequence, read N- to C-terminus: Argininosuccinate synthase (445 aa).

ATP is bound by residues 17–25 (AFSGGLDTS) and A43. Y99 is a binding site for L-citrulline. ATP is bound by residues G129 and T131. L-aspartate is bound by residues T131, N135, and D136. Position 135 (N135) interacts with L-citrulline. An ATP-binding site is contributed by D136. Positions 139 and 192 each coordinate L-citrulline. Residue D194 coordinates ATP. Residues T201, E203, and E280 each contribute to the L-citrulline site.

The protein belongs to the argininosuccinate synthase family. Type 2 subfamily. In terms of assembly, homotetramer.

Its subcellular location is the cytoplasm. It carries out the reaction L-citrulline + L-aspartate + ATP = 2-(N(omega)-L-arginino)succinate + AMP + diphosphate + H(+). It participates in amino-acid biosynthesis; L-arginine biosynthesis; L-arginine from L-ornithine and carbamoyl phosphate: step 2/3. The chain is Argininosuccinate synthase from Ralstonia pickettii (strain 12J).